We begin with the raw amino-acid sequence, 161 residues long: Cyclic pyranopterin monophosphate synthase (161 aa).

Residues 75–77 and 113–114 each bind substrate; these read LCH and ME. D128 is an active-site residue.

Belongs to the MoaC family. As to quaternary structure, homohexamer; trimer of dimers.

The catalysed reaction is (8S)-3',8-cyclo-7,8-dihydroguanosine 5'-triphosphate = cyclic pyranopterin phosphate + diphosphate. It functions in the pathway cofactor biosynthesis; molybdopterin biosynthesis. Its function is as follows. Catalyzes the conversion of (8S)-3',8-cyclo-7,8-dihydroguanosine 5'-triphosphate to cyclic pyranopterin monophosphate (cPMP). The protein is Cyclic pyranopterin monophosphate synthase of Thioalkalivibrio sulfidiphilus (strain HL-EbGR7).